A 315-amino-acid polypeptide reads, in one-letter code: Methionyl-tRNA formyltransferase (315 aa).

113-116 (SLLP) serves as a coordination point for (6S)-5,6,7,8-tetrahydrofolate.

This sequence belongs to the Fmt family.

It carries out the reaction L-methionyl-tRNA(fMet) + (6R)-10-formyltetrahydrofolate = N-formyl-L-methionyl-tRNA(fMet) + (6S)-5,6,7,8-tetrahydrofolate + H(+). Attaches a formyl group to the free amino group of methionyl-tRNA(fMet). The formyl group appears to play a dual role in the initiator identity of N-formylmethionyl-tRNA by promoting its recognition by IF2 and preventing the misappropriation of this tRNA by the elongation apparatus. The chain is Methionyl-tRNA formyltransferase from Escherichia coli (strain SE11).